Reading from the N-terminus, the 189-residue chain is MEGQEDYQLLYEGRRSQPAPEEQEASALPRGRRQRGVEAGEGSVGREEARGHRRSQHRDRLGGGSMGSNVIGLPGVNPPTSEVVVLEPRSFDEMAQVIQYLRERKTVIMNLTLMDPAEAQRSVDFVAGGTYAIDGHQERIGENIFLFTPSTVTVSTPSSQGMPPLQRPLQSPTPLWPSGYEHLQAVGQH.

Disordered regions lie at residues 1–75 (MEGQ…GLPG) and 155–174 (STPSSQGMPPLQRPLQSPTP).

The protein belongs to the SepF family. Homodimer. Interacts with FtsZ.

It localises to the cytoplasm. Cell division protein that is part of the divisome complex and is recruited early to the Z-ring. Probably stimulates Z-ring formation, perhaps through the cross-linking of FtsZ protofilaments. Its function overlaps with FtsA. The chain is Cell division protein SepF from Synechococcus sp. (strain JA-3-3Ab) (Cyanobacteria bacterium Yellowstone A-Prime).